The following is a 45-amino-acid chain: Large ribosomal subunit protein bL34 (45 aa).

This sequence belongs to the bacterial ribosomal protein bL34 family.

This Opitutus terrae (strain DSM 11246 / JCM 15787 / PB90-1) protein is Large ribosomal subunit protein bL34.